A 396-amino-acid chain; its full sequence is Ribosomal RNA large subunit methyltransferase I (396 aa).

A PUA domain is found at 2-81; the sequence is SVRLVLAKGR…ESIDIAFFSR (80 aa).

This sequence belongs to the methyltransferase superfamily. RlmI family.

The protein localises to the cytoplasm. The catalysed reaction is cytidine(1962) in 23S rRNA + S-adenosyl-L-methionine = 5-methylcytidine(1962) in 23S rRNA + S-adenosyl-L-homocysteine + H(+). In terms of biological role, specifically methylates the cytosine at position 1962 (m5C1962) of 23S rRNA. This Shigella boydii serotype 18 (strain CDC 3083-94 / BS512) protein is Ribosomal RNA large subunit methyltransferase I.